A 239-amino-acid chain; its full sequence is Ribose-5-phosphate isomerase A (239 aa).

Substrate contacts are provided by residues 39-42 (SGST), 95-98 (DGAD), and 108-111 (KGGG). E117 functions as the Proton acceptor in the catalytic mechanism. K135 is a binding site for substrate.

This sequence belongs to the ribose 5-phosphate isomerase family. Homodimer.

The enzyme catalyses aldehydo-D-ribose 5-phosphate = D-ribulose 5-phosphate. It functions in the pathway carbohydrate degradation; pentose phosphate pathway; D-ribose 5-phosphate from D-ribulose 5-phosphate (non-oxidative stage): step 1/1. Catalyzes the reversible conversion of ribose-5-phosphate to ribulose 5-phosphate. The polypeptide is Ribose-5-phosphate isomerase A (Chlamydia muridarum (strain MoPn / Nigg)).